The chain runs to 103 residues: Large ribosomal subunit protein bL28 (103 aa).

The protein belongs to the bacterial ribosomal protein bL28 family.

The chain is Large ribosomal subunit protein bL28 from Anaplasma marginale (strain St. Maries).